Here is a 147-residue protein sequence, read N- to C-terminus: Plasminogen receptor (KT) (147 aa).

Topologically, residues 1-52 (MGFIFSKSMNENMKNQQEFMVMHARLQLERQLIMQNEMRERQMAMQIAWSRE) are extracellular. Residues 53-73 (FLKYFGTFFGIATISLAAGAI) traverse the membrane as a helical segment. At 74–78 (KRKKP) the chain is on the cytoplasmic side. The chain crosses the membrane as a helical span at residues 79-99 (AFLIPIVPLSFIFTYQYDLGY). The Extracellular segment spans residues 100 to 147 (GTLLQRMKSEAEDILETEKTKLELPKGLITFESLEKARREQSKFFSDK).

As to quaternary structure, interacts with PLAT. Interacts with PLAUR. As to expression, expressed in adrenal medulla (pheochromocytoma).

It localises to the cell membrane. Receptor for plasminogen. Regulates urokinase plasminogen activator-dependent and stimulates tissue-type plasminogen activator-dependent cell surface plasminogen activation. Proposed to be part of a local catecholaminergic cell plasminogen activation system that regulates neuroendocrine prohormone processing. Involved in regulation of inflammatory response; regulates monocyte chemotactic migration and matrix metalloproteinase activation, such as of MMP2 and MMP9. In Rattus norvegicus (Rat), this protein is Plasminogen receptor (KT) (Plgrkt).